A 376-amino-acid chain; its full sequence is MAGSSSSGVFNSLRATLDMREAELVEIPLIQPADPFLDMAGEDLRRRIFLTENENGDSLCLRPEFTIPVCRNHIALNAATPKRYAYLGEVFRQHRDGAAEFLQAGIEDLGASDEAASDARSIADALSCVRAAAPEAELEIVLGDQSVFAGMLKALGLPQGWRKKLLRSFGDANSMEQVLAELTGAQRRDPLPETLAGLVAEGDESGLARMLEAEMLEAGISPSAGRSPAEIARRLIEKEDLAATRFPASALDLLKQFLETRVTLDSAAVTLRAFASEHALDLAAVLQKFEARSEAIANAGIATKDIIYDASFGRPLDYYTGLVYEIRAPGVEKEGVLAGGGRYDRLLTMLGASENIPGVGFSIWLDRLQMLVGEKK.

This sequence belongs to the class-II aminoacyl-tRNA synthetase family. HisZ subfamily. Heteromultimer composed of HisG and HisZ subunits.

It localises to the cytoplasm. The protein operates within amino-acid biosynthesis; L-histidine biosynthesis; L-histidine from 5-phospho-alpha-D-ribose 1-diphosphate: step 1/9. Required for the first step of histidine biosynthesis. May allow the feedback regulation of ATP phosphoribosyltransferase activity by histidine. This is ATP phosphoribosyltransferase regulatory subunit from Brucella anthropi (strain ATCC 49188 / DSM 6882 / CCUG 24695 / JCM 21032 / LMG 3331 / NBRC 15819 / NCTC 12168 / Alc 37) (Ochrobactrum anthropi).